The sequence spans 123 residues: Large ribosomal subunit protein uL24 (123 aa).

It belongs to the universal ribosomal protein uL24 family. In terms of assembly, part of the 50S ribosomal subunit.

One of two assembly initiator proteins, it binds directly to the 5'-end of the 23S rRNA, where it nucleates assembly of the 50S subunit. In terms of biological role, located at the polypeptide exit tunnel on the outside of the subunit. This Pyrobaculum islandicum (strain DSM 4184 / JCM 9189 / GEO3) protein is Large ribosomal subunit protein uL24.